A 59-amino-acid chain; its full sequence is VGVRSYYMKYIIVGFTLPRPHNPPAFILSFRPKRINTGSYPPIQNCKFLIADGSRKVFT.

The protein localises to the mitochondrion. This is an uncharacterized protein from Ascobolus immersus.